Consider the following 896-residue polypeptide: Translation initiation factor IF-2 (896 aa).

Residues 32-306 form a disordered region; it reads LAQAGSSDTK…HKTKKQSEEH (275 aa). Composition is skewed to polar residues over residues 35–48 and 114–126; these read AGSS…VSKA and ADST…SSQE. Residues 156 to 170 are compositionally biased toward basic and acidic residues; that stretch reads ARNEETPIIRTRTEP. Polar residues predominate over residues 213–237; it reads QQTRPSVETASTKQQQPSGTNTRPA. Positions 256 to 280 are enriched in basic and acidic residues; it reads RGPDRDRTKRSDENVKAFTGRDRYG. Positions 401-570 constitute a tr-type G domain; the sequence is IRSPIVAFMG…ALQAEVLELK (170 aa). The tract at residues 410–417 is G1; that stretch reads GHVDHGKT. 410 to 417 provides a ligand contact to GTP; that stretch reads GHVDHGKT. The interval 435-439 is G2; it reads AITQH. The tract at residues 456 to 459 is G3; it reads DTPG. Residues 456–460 and 510–513 contribute to the GTP site; these read DTPGH and NKCD. A G4 region spans residues 510–513; the sequence is NKCD. Residues 546 to 548 are G5; the sequence is SAK.

It belongs to the TRAFAC class translation factor GTPase superfamily. Classic translation factor GTPase family. IF-2 subfamily.

It is found in the cytoplasm. Its function is as follows. One of the essential components for the initiation of protein synthesis. Protects formylmethionyl-tRNA from spontaneous hydrolysis and promotes its binding to the 30S ribosomal subunits. Also involved in the hydrolysis of GTP during the formation of the 70S ribosomal complex. The protein is Translation initiation factor IF-2 (infB) of Chlamydia muridarum (strain MoPn / Nigg).